The following is a 384-amino-acid chain: Putative odorant receptor 98b (384 aa).

Residues 1–34 (MLTDKFLRLQSALFRLLGLELLHEQDVGHRYPWR) are Cytoplasmic-facing. A helical membrane pass occupies residues 35 to 55 (SICCILSVASFMPLTIAFGLQ). The Extracellular portion of the chain corresponds to 56–66 (NVQNVEQLTDS). A helical transmembrane segment spans residues 67 to 87 (LCSVLVDLLALCKIGLFLWLY). The Cytoplasmic portion of the chain corresponds to 88 to 128 (KDFKFLIGQFYCVLQTETHTAVAEMIVTRESRRDQFISAMY). A helical membrane pass occupies residues 129 to 149 (AYCFITAGLSACLMSPLSMLI). Residues 150-177 (SYQRTGELQPKFPFPSVYPWDNMKLSNY) are Extracellular-facing. The helical transmembrane segment at 178 to 198 (IISYFWNVCAALGVALPTVCV) threads the bilayer. Over 199 to 258 (DTLFCSLSHNLCALFQIARHKMMHFEGRNTKETHENLKHVFQLYALCLNLGHFLNEYFRP) the chain is Cytoplasmic. The helical transmembrane segment at 259–279 (LICQFVAASLHLCVLCYQLSA) threads the bilayer. Residues 280–284 (NILQP) are Extracellular-facing. Residues 285-305 (ALLFYAAFTAAVVGQVSIYCF) form a helical membrane-spanning segment. Residues 306-329 (CGSSIHSECQLFGQAIYESSWPHL) are Cytoplasmic-facing. The chain crosses the membrane as a helical span at residues 330–350 (LQENLQLVSSLKIAMMRSSLG). The Extracellular segment spans residues 351–384 (CPIDGYFFEANRETLITVSKAFIKVSKKTPQVND).

It belongs to the insect chemoreceptor superfamily. Heteromeric odorant receptor channel (TC 1.A.69) family. Or1a subfamily. Interacts with Orco. Complexes exist early in the endomembrane system in olfactory sensory neurons (OSNs), coupling these complexes to the conserved ciliary trafficking pathway.

Its subcellular location is the cell membrane. Its function is as follows. Odorant receptor which mediates acceptance or avoidance behavior, depending on its substrates. The odorant receptor repertoire encodes a large collection of odor stimuli that vary widely in identity, intensity, and duration. May form a complex with Orco to form odorant-sensing units, providing sensitive and prolonged odorant signaling and calcium permeability. The chain is Putative odorant receptor 98b (Or98b) from Drosophila melanogaster (Fruit fly).